An 89-amino-acid polypeptide reads, in one-letter code: MSITPERKTALVKEYALKDGDTGSPEVQVAILTERIANLTEHFKTHVKDNHSRRGLLKLVSQRRQLLDYVKGRDEPRYKALIERLGIRR.

This sequence belongs to the universal ribosomal protein uS15 family. In terms of assembly, part of the 30S ribosomal subunit. Forms a bridge to the 50S subunit in the 70S ribosome, contacting the 23S rRNA.

Its function is as follows. One of the primary rRNA binding proteins, it binds directly to 16S rRNA where it helps nucleate assembly of the platform of the 30S subunit by binding and bridging several RNA helices of the 16S rRNA. Functionally, forms an intersubunit bridge (bridge B4) with the 23S rRNA of the 50S subunit in the ribosome. In Beijerinckia indica subsp. indica (strain ATCC 9039 / DSM 1715 / NCIMB 8712), this protein is Small ribosomal subunit protein uS15.